Here is a 258-residue protein sequence, read N- to C-terminus: Triosephosphate isomerase (258 aa).

N9–K11 is a substrate binding site. The active-site Electrophile is H95. E167 functions as the Proton acceptor in the catalytic mechanism. Substrate-binding residues include G173 and S212.

It belongs to the triosephosphate isomerase family. In terms of assembly, homodimer.

It is found in the cytoplasm. The enzyme catalyses D-glyceraldehyde 3-phosphate = dihydroxyacetone phosphate. It functions in the pathway carbohydrate biosynthesis; gluconeogenesis. The protein operates within carbohydrate degradation; glycolysis; D-glyceraldehyde 3-phosphate from glycerone phosphate: step 1/1. In terms of biological role, involved in the gluconeogenesis. Catalyzes stereospecifically the conversion of dihydroxyacetone phosphate (DHAP) to D-glyceraldehyde-3-phosphate (G3P). The sequence is that of Triosephosphate isomerase from Blochmanniella pennsylvanica (strain BPEN).